A 216-amino-acid chain; its full sequence is MKKVRKLYEGKAKIVYETDEKDKLILEFKDVATAFDGVKKEEIKGKGSLNNEISSLIFEILEDHGIKTHYIKKLSDREMLVWRAERFPVEVVVRNYAAGSFVKRYGVKEGTKLEQPLVEFFMKSDELHDPMVCINHIKVLKLAPAELVPEMEKIALKVNEILKKIFEEKGILLVDFKLEFGRLPSGELAIVDEISPDSMRLWDKSTGENWIKTDSV.

The protein belongs to the SAICAR synthetase family.

It catalyses the reaction 5-amino-1-(5-phospho-D-ribosyl)imidazole-4-carboxylate + L-aspartate + ATP = (2S)-2-[5-amino-1-(5-phospho-beta-D-ribosyl)imidazole-4-carboxamido]succinate + ADP + phosphate + 2 H(+). It participates in purine metabolism; IMP biosynthesis via de novo pathway; 5-amino-1-(5-phospho-D-ribosyl)imidazole-4-carboxamide from 5-amino-1-(5-phospho-D-ribosyl)imidazole-4-carboxylate: step 1/2. The sequence is that of Phosphoribosylaminoimidazole-succinocarboxamide synthase (purC) from Aquifex aeolicus (strain VF5).